A 444-amino-acid chain; its full sequence is Tubulin beta chain (444 aa).

8 residues coordinate GTP: Q11, E69, S138, G142, T143, G144, N204, and N226. E69 serves as a coordination point for Mg(2+).

Belongs to the tubulin family. In terms of assembly, dimer of alpha and beta chains. A typical microtubule is a hollow water-filled tube with an outer diameter of 25 nm and an inner diameter of 15 nM. Alpha-beta heterodimers associate head-to-tail to form protofilaments running lengthwise along the microtubule wall with the beta-tubulin subunit facing the microtubule plus end conferring a structural polarity. Microtubules usually have 13 protofilaments but different protofilament numbers can be found in some organisms and specialized cells. The cofactor is Mg(2+).

Its subcellular location is the cytoplasm. The protein localises to the cytoskeleton. Tubulin is the major constituent of microtubules, a cylinder consisting of laterally associated linear protofilaments composed of alpha- and beta-tubulin heterodimers. Microtubules grow by the addition of GTP-tubulin dimers to the microtubule end, where a stabilizing cap forms. Below the cap, tubulin dimers are in GDP-bound state, owing to GTPase activity of alpha-tubulin. The polypeptide is Tubulin beta chain (Euplotoides octocarinatus (Freshwater ciliate)).